The primary structure comprises 319 residues: Free fatty acid receptor 3 (319 aa).

Residues 1 to 15 lie on the Extracellular side of the membrane; that stretch reads MGTSFFLGNYWLFFS. A helical transmembrane segment spans residues 16 to 36; the sequence is VYLLVFLVGLPLNVMALVVFV. Residues 37 to 43 lie on the Cytoplasmic side of the membrane; sequence GKLRRRP. Residues 44-64 form a helical membrane-spanning segment; it reads VAVDLLLLNLTISDLLLLLFL. Over 65 to 98 the chain is Extracellular; that stretch reads PFRMVEAACGMRWLLPFIFCPLSGFLFFTTIYLT. Cys84 and Cys165 are oxidised to a cystine. A helical membrane pass occupies residues 99–119; sequence SLFLTAVSIERFLSVAYPLWY. The Cytoplasmic segment spans residues 120-127; that stretch reads KTRPRLAQ. A helical membrane pass occupies residues 128-148; that stretch reads AGLVSVVCWFLASAHCSVVYI. At 149–183 the chain is on the extracellular side; it reads TEYWGNATYSQGTNGTCYLEFREDQLAILLPVRLE. 2 N-linked (GlcNAc...) asparagine glycosylation sites follow: Asn154 and Asn162. A helical transmembrane segment spans residues 184–206; it reads MAVVLFMVPLCITSYCYSRLVWI. At 207–218 the chain is on the cytoplasmic side; it reads LSRGASRRRRKR. A helical membrane pass occupies residues 219-239; the sequence is IMGLLAATLLIFFVCFGPYNM. The Extracellular portion of the chain corresponds to 240 to 254; sequence SHVVGYVSRESPSWR. The helical transmembrane segment at 255–275 threads the bilayer; it reads SYVLLLSTLNSCIDPLVFYFS. The Cytoplasmic segment spans residues 276–319; it reads SSKFQADFHQLLGRLLRTCVPWTQQVSLELKVKNGEEPSKECPS.

The protein belongs to the G-protein coupled receptor 1 family. Expressed in white adipose tissue and skeletal muscle (at protein level). Abundantly expressed in sympathetic ganglia such as the superior cervical ganglion. Also expressed by intestinal endocrine cells.

Its subcellular location is the cell membrane. Its function is as follows. G protein-coupled receptor that is activated by a major product of dietary fiber digestion, the short chain fatty acids (SCFAs), and that plays a role in the regulation of whole-body energy homeostasis and in intestinal immunity. In omnivorous mammals, the short chain fatty acids acetate, propionate and butyrate are produced primarily by the gut microbiome that metabolizes dietary fibers. SCFAs serve as a source of energy but also act as signaling molecules. That G protein-coupled receptor is probably coupled to the pertussis toxin-sensitive, G(i/o)-alpha family of G proteins. Its activation results in the formation of inositol 1,4,5-trisphosphate, the mobilization of intracellular calcium, the phosphorylation of the MAPK3/ERK1 and MAPK1/ERK2 kinases and the inhibition of intracellular cAMP accumulation. Activated by SCFAs and by beta-hydroxybutyrate, a ketone body produced by the liver upon starvation, it inhibits N-type calcium channels and modulates the activity of sympathetic neurons through a signaling cascade involving the beta and gamma subunits of its coupled G protein, phospholipase C and MAP kinases. Thereby, it may regulate energy expenditure through the control of the sympathetic nervous system that controls for instance heart rate. Upon activation by SCFAs accumulating in the intestine, it may also signal to the brain via neural circuits which in turn would regulate intestinal gluconeogenesis. May also control the production of hormones involved in whole-body energy homeostasis. May for instance, regulate blood pressure through renin secretion. May also regulate secretion of the PYY peptide by enteroendocrine cells and control gut motility, intestinal transit rate, and the harvesting of energy from SCFAs produced by gut microbiota. May also indirectly regulate the production of LEP/Leptin, a hormone acting on the CNS to inhibit food intake, in response to the presence of short-chain fatty acids in the intestine. Finally, may also play a role in glucose homeostasis. Besides its role in energy homeostasis, may play a role in intestinal immunity. May mediate the activation of the inflammatory and immune response by SCFAs in the gut, regulating the rapid production of chemokines and cytokines by intestinal epithelial cells. Exhibits an SCFA-independent constitutive G protein-coupled receptor activity. The protein is Free fatty acid receptor 3 (Ffar3) of Mus musculus (Mouse).